Here is a 207-residue protein sequence, read N- to C-terminus: Claudin-11 (207 aa).

Met-1 is a topological domain (cytoplasmic). Residues 2–22 (VATCLQVVGFVTSFVGWIGII) form a helical membrane-spanning segment. Topologically, residues 23–82 (VTTSTNDWVVTCSYTIPTCRKMDELGSKGLWADCVMATGLYHCKPLVDILILPGYVQACR) are extracellular. Residues 83–103 (ALMIAASVLGLPAILLLLTVL) form a helical membrane-spanning segment. Over 104–122 (PCIRMGHEPGVAKYRRAQL) the chain is Cytoplasmic. Residues 123-143 (AGVLLILLALCAIVATIWFPV) form a helical membrane-spanning segment. Over 144 to 157 (CAHREITIVSFGYS) the chain is Extracellular. Residues 158–178 (LYAGWIGAVMCLVGGCVIVCC) form a helical membrane-spanning segment. The Cytoplasmic segment spans residues 179–207 (SGDAQSFGENRFYYSSGSSSPTHAKSAHV). A phosphoserine mark is found at Ser-193, Ser-194, Ser-197, and Ser-198.

The protein belongs to the claudin family. In terms of assembly, interacts with tetraspanin-3/TSPAN3. Interacts with OCLN.

It is found in the cell junction. Its subcellular location is the tight junction. It localises to the cell membrane. Plays a major role in tight junction-specific obliteration of the intercellular space, through calcium-independent cell-adhesion activity. In Mus musculus (Mouse), this protein is Claudin-11 (Cldn11).